Reading from the N-terminus, the 313-residue chain is uncharacterized protein (313 aa).

This is an uncharacterized protein from Archaeoglobus fulgidus (strain ATCC 49558 / DSM 4304 / JCM 9628 / NBRC 100126 / VC-16).